The chain runs to 140 residues: Nucleoside diphosphate kinase (140 aa).

ATP is bound by residues lysine 11, phenylalanine 59, arginine 87, threonine 93, arginine 104, and asparagine 114. The active-site Pros-phosphohistidine intermediate is the histidine 117.

This sequence belongs to the NDK family. As to quaternary structure, homotetramer. Requires Mg(2+) as cofactor.

It is found in the cytoplasm. The catalysed reaction is a 2'-deoxyribonucleoside 5'-diphosphate + ATP = a 2'-deoxyribonucleoside 5'-triphosphate + ADP. The enzyme catalyses a ribonucleoside 5'-diphosphate + ATP = a ribonucleoside 5'-triphosphate + ADP. In terms of biological role, major role in the synthesis of nucleoside triphosphates other than ATP. The ATP gamma phosphate is transferred to the NDP beta phosphate via a ping-pong mechanism, using a phosphorylated active-site intermediate. The chain is Nucleoside diphosphate kinase from Methylorubrum populi (strain ATCC BAA-705 / NCIMB 13946 / BJ001) (Methylobacterium populi).